The chain runs to 635 residues: Biosynthetic arginine decarboxylase (635 aa).

Lys-100 is modified (N6-(pyridoxal phosphate)lysine). A substrate-binding site is contributed by 282–292 (VDIGGGLGVDY).

It belongs to the Orn/Lys/Arg decarboxylase class-II family. SpeA subfamily. Mg(2+) serves as cofactor. Requires pyridoxal 5'-phosphate as cofactor.

The catalysed reaction is L-arginine + H(+) = agmatine + CO2. It functions in the pathway amine and polyamine biosynthesis; agmatine biosynthesis; agmatine from L-arginine: step 1/1. In terms of biological role, catalyzes the biosynthesis of agmatine from arginine. The chain is Biosynthetic arginine decarboxylase from Geotalea daltonii (strain DSM 22248 / JCM 15807 / FRC-32) (Geobacter daltonii).